Here is a 197-residue protein sequence, read N- to C-terminus: CASP-like protein 0U1 (197 aa).

Over M1–K13 the chain is Cytoplasmic. A helical membrane pass occupies residues F14 to Q34. The Extracellular portion of the chain corresponds to R35 to K63. A helical membrane pass occupies residues F64–L84. Residues L85 to T99 lie on the Cytoplasmic side of the membrane. Residues V100–I120 traverse the membrane as a helical segment. Topologically, residues V121–K135 are extracellular. Residues A136–Y156 traverse the membrane as a helical segment. The Cytoplasmic portion of the chain corresponds to K157–A197. The segment at V178–A197 is disordered. The span at S180 to A197 shows a compositional bias: low complexity.

The protein belongs to the Casparian strip membrane proteins (CASP) family. Homodimer and heterodimers.

Its subcellular location is the cell membrane. This chain is CASP-like protein 0U1, found in Micromonas commoda (strain RCC299 / NOUM17 / CCMP2709) (Picoplanktonic green alga).